The chain runs to 201 residues: Probable phosphopantothenoylcysteine decarboxylase (201 aa).

FMN contacts are provided by residues 20-22 (GSV), 45-47 (SKS), 98-101 (SANT), and A132. Residues N134 and 164–166 (KLA) each bind substrate. C167 (proton donor) is an active-site residue. M175 is a substrate binding site.

Belongs to the HFCD (homooligomeric flavin containing Cys decarboxylase) superfamily. In terms of assembly, homotrimer. It depends on FMN as a cofactor. Expressed in roots, shoots, leaves, flowers, developing siliques and seeds.

It carries out the reaction N-[(R)-4-phosphopantothenoyl]-L-cysteine + H(+) = (R)-4'-phosphopantetheine + CO2. It participates in cofactor biosynthesis; coenzyme A biosynthesis; CoA from (R)-pantothenate: step 3/5. In terms of biological role, involved in plant growth and salt and osmotic tolerance. Catalyzes the decarboxylation of 4'-phosphopantothenoylcysteine to 4'-phosphopantetheine, a key step in coenzyme A biosynthesis. The enzyme is also able to decarboxylate pantothenoylcysteine to pantothenoylcysteamine. In Arabidopsis thaliana (Mouse-ear cress), this protein is Probable phosphopantothenoylcysteine decarboxylase (HAL3B).